Here is a 319-residue protein sequence, read N- to C-terminus: MEPILAPNPNRFVIFPIQYHDIWNMYKKAEASFWTVEEVDISKDINDWNKLTPDEKYFIKHVLAFFAASDGIVNENLAERFCTEVQITEARCFYGFQMAIENIHSEMYSLLIDTYVKDSNEKNYLFNAIETMPCVKKKADWAQKWIHDSAGYGERLIAFAAVEGIFFSGSFASIFWLKKRGLMPGLTFSNELISRDEGLHCDFACLMFKHLLHPPSEETVRSIITDAVSIEQEFLTAALPVKLIGMNCEMMKTYIEFVADRLISELGFKKIYNVTNPFDFMENISLEGKTNFFEKRVGEYQKMGVMSQEDNHFSLDVDF.

D70, E101, and H104 together coordinate Fe cation. Residue Y108 is part of the active site. Residues E163, E197, and H200 each coordinate Fe cation. The segment at 313-319 (FSLDVDF) is interaction with R1.

Belongs to the ribonucleoside diphosphate reductase small chain family. Interacts with RNR1/OPG080 subunit. Can interact with host RNR1 supunit. Fe cation is required as a cofactor.

The enzyme catalyses a 2'-deoxyribonucleoside 5'-diphosphate + [thioredoxin]-disulfide + H2O = a ribonucleoside 5'-diphosphate + [thioredoxin]-dithiol. Ribonucleoside-diphosphate reductase holoenzyme provides the precursors necessary for viral DNA synthesis. Allows virus growth in non-dividing cells. Catalyzes the biosynthesis of deoxyribonucleotides from the corresponding ribonucleotides. This chain is Ribonucleoside-diphosphate reductase small chain (OPG048), found in Vaccinia virus (strain Ankara) (VACV).